We begin with the raw amino-acid sequence, 321 residues long: Leucine-rich repeat-containing protein 46 (321 aa).

LRR repeat units lie at residues 45–66 (ELQT…EGLK), 67–88 (NLHS…ACVP), 89–110 (SLRF…LDLP), and 111–132 (CLQF…EFPQ). Residues 142–184 (NSCTNQDSYRELVIEALPLLLDLDGQPVMERWISDEEDEASSE) form the LRRCT domain. S175 and S182 each carry phosphoserine. The stretch at 198 to 222 (RGFLKELEQELSRHREHRQQAALTQ) forms a coiled coil. Positions 235 to 321 (NLPLLPGVPM…TKTMAKRSKK (87 aa)) are disordered.

It localises to the cell projection. It is found in the cilium. The protein resides in the flagellum. Required for normal spermatogenesis and male fertility. Plays an important role in sperm flagellum biogenesis. This is Leucine-rich repeat-containing protein 46 (LRRC46) from Macaca fascicularis (Crab-eating macaque).